A 443-amino-acid polypeptide reads, in one-letter code: KICSTOR complex protein ITFG2 (443 aa).

The FG-GAP 1; atypical repeat unit spans residues 19-48 (FPHAICLGDVDNDALNELVVGDTSGKLSVY). Ser104 bears the Phosphoserine mark. An FG-GAP 2; atypical repeat occupies 125–154 (NTKVMLISDIDGDGCYELVVGYTDRVVRAF). At Ser219 the chain carries Phosphoserine.

In terms of assembly, part of the KICSTOR complex composed of KPTN, ITFG2, KICS2 and SZT2. SZT2 probably serves as a link between the other three proteins in the KICSTOR complex and may mediate the direct interaction with the GATOR complex via GATOR1. The KICSTOR complex interacts directly with the GATOR1 complex and most probably indirectly with the GATOR2 complex in an amino acid-independent manner.

Its subcellular location is the lysosome membrane. Functionally, as part of the KICSTOR complex functions in the amino acid-sensing branch of the TORC1 signaling pathway. Recruits, in an amino acid-independent manner, the GATOR1 complex to the lysosomal membranes and allows its interaction with GATOR2 and the RAG GTPases. Functions upstream of the RAG GTPases and is required to negatively regulate mTORC1 signaling in absence of amino acids. In absence of the KICSTOR complex mTORC1 is constitutively localized to the lysosome and activated. The KICSTOR complex is also probably involved in the regulation of mTORC1 by glucose. The protein is KICSTOR complex protein ITFG2 of Mus musculus (Mouse).